Here is a 704-residue protein sequence, read N- to C-terminus: Probable serine/threonine-protein kinase WNK1 (704 aa).

The Protein kinase domain occupies 27–284; sequence GRYNDVLGKG…ARELLKDPFL (258 aa). ATP is bound by residues 107-110 and K157; that span reads TEMF. The Proton acceptor role is filled by D174. The segment at 499-521 is disordered; it reads QTDLQDSGGSSDDGGGQTQHVKD.

This sequence belongs to the protein kinase superfamily. Ser/Thr protein kinase family. WNK subfamily.

It carries out the reaction L-seryl-[protein] + ATP = O-phospho-L-seryl-[protein] + ADP + H(+). The catalysed reaction is L-threonyl-[protein] + ATP = O-phospho-L-threonyl-[protein] + ADP + H(+). This Oryza sativa subsp. japonica (Rice) protein is Probable serine/threonine-protein kinase WNK1 (WNK1).